Reading from the N-terminus, the 675-residue chain is Heat shock 70 kDa protein 12A (675 aa).

Positions 1–45 (MADKEAGGGDAGPRETAPTSTYSSPARSLGDTGITPLSPSHILND) are disordered. Ala2 is modified (N-acetylalanine). Residues 17 to 26 (APTSTYSSPA) are compositionally biased toward polar residues.

It belongs to the heat shock protein 70 family. Interacts with SORL1 (via cytosolic C-terminus); this interaction affects SORL1 internalization and subcellular localization. In terms of tissue distribution, expressed most strongly in brain, kidney and heart with little or no expression in other tissues. In the brain, expressed in glial cells, including astrocytes (at protein level). In the aorta, preferentially expressed in lesions.

It is found in the cytoplasm. The protein localises to the nucleus. Adapter protein for SORL1, but not SORT1. Delays SORL1 internalization and affects SORL1 subcellular localization. This is Heat shock 70 kDa protein 12A (Hspa12a) from Mus musculus (Mouse).